A 765-amino-acid chain; its full sequence is 5-methyltetrahydropteroyltriglutamate--homocysteine methyltransferase 2 (765 aa).

5-methyltetrahydropteroyltri-L-glutamate contacts are provided by Lys18 and Asn116. L-homocysteine is bound by residues 437 to 439 (IGS) and Glu490. Residues 437 to 439 (IGS) and Glu490 contribute to the L-methionine site. Residues Asp495, Tyr518, 521 to 522 (RC), and Trp567 contribute to the 5-methyltetrahydropteroyltri-L-glutamate site. Residue Asp605 coordinates L-homocysteine. Residue Asp605 participates in L-methionine binding. Residues His647, Cys649, His658, Asp662, and Glu671 each contribute to the Zn(2+) site. His701 serves as the catalytic Proton donor. Residue Cys733 participates in Zn(2+) binding.

This sequence belongs to the vitamin-B12 independent methionine synthase family. It depends on Zn(2+) as a cofactor. As to expression, expressed in leaves, stems and siliques.

It is found in the cytoplasm. It localises to the cytosol. It catalyses the reaction 5-methyltetrahydropteroyltri-L-glutamate + L-homocysteine = tetrahydropteroyltri-L-glutamate + L-methionine. It participates in amino-acid biosynthesis; L-methionine biosynthesis via de novo pathway; L-methionine from L-homocysteine (MetE route): step 1/1. In terms of biological role, catalyzes the transfer of a methyl group from 5-methyltetrahydrofolate to homocysteine resulting in methionine formation. The protein is 5-methyltetrahydropteroyltriglutamate--homocysteine methyltransferase 2 (MS2) of Arabidopsis thaliana (Mouse-ear cress).